Consider the following 463-residue polypeptide: Probable Xaa-Pro aminopeptidase pepP (463 aa).

Residues Asp-259, Asp-270, Glu-393, and Glu-433 each coordinate Mn(2+).

It belongs to the peptidase M24B family. It depends on Mn(2+) as a cofactor.

It carries out the reaction Release of any N-terminal amino acid, including proline, that is linked to proline, even from a dipeptide or tripeptide.. Catalyzes the removal of a penultimate prolyl residue from the N-termini of peptides. The protein is Probable Xaa-Pro aminopeptidase pepP (pepP) of Pyrenophora teres f. teres (strain 0-1) (Barley net blotch fungus).